A 188-amino-acid chain; its full sequence is Large ribosomal subunit protein eL18 (188 aa).

Residue Lys-119 forms a Glycyl lysine isopeptide (Lys-Gly) (interchain with G-Cter in SUMO2) linkage. Position 130 is a phosphoserine (Ser-130). A disordered region spans residues 151-188 (HFGKAPGTPHSHTKPYVRSKGRKFERARGRRASRGYKN). Phosphothreonine is present on Thr-158. 2 stretches are compositionally biased toward basic residues: residues 161-171 (SHTKPYVRSKG) and 178-188 (RGRRASRGYKN). Lys-164 participates in a covalent cross-link: Glycyl lysine isopeptide (Lys-Gly) (interchain with G-Cter in SUMO2).

Belongs to the eukaryotic ribosomal protein eL18 family. As to quaternary structure, component of the large ribosomal subunit.

The protein localises to the cytoplasm. The protein resides in the cytosol. Its subcellular location is the rough endoplasmic reticulum. Component of the large ribosomal subunit. The ribosome is a large ribonucleoprotein complex responsible for the synthesis of proteins in the cell. The sequence is that of Large ribosomal subunit protein eL18 (RPL18) from Canis lupus familiaris (Dog).